Here is a 393-residue protein sequence, read N- to C-terminus: tRNA(Met) cytidine acetate ligase (393 aa).

ATP-binding residues include Gly-81, Asn-142, and Arg-167.

This sequence belongs to the TmcAL family.

It is found in the cytoplasm. It carries out the reaction cytidine(34) in elongator tRNA(Met) + acetate + ATP = N(4)-acetylcytidine(34) in elongator tRNA(Met) + AMP + diphosphate. Catalyzes the formation of N(4)-acetylcytidine (ac(4)C) at the wobble position of elongator tRNA(Met), using acetate and ATP as substrates. First activates an acetate ion to form acetyladenylate (Ac-AMP) and then transfers the acetyl group to tRNA to form ac(4)C34. This Bacillus cereus (strain AH820) protein is tRNA(Met) cytidine acetate ligase.